The primary structure comprises 437 residues: Trigger factor (437 aa).

Positions 161–246 (DDQVNIDFVG…VNSVSAPQLP (86 aa)) constitute a PPIase FKBP-type domain.

It belongs to the FKBP-type PPIase family. Tig subfamily.

It is found in the cytoplasm. It catalyses the reaction [protein]-peptidylproline (omega=180) = [protein]-peptidylproline (omega=0). Its function is as follows. Involved in protein export. Acts as a chaperone by maintaining the newly synthesized protein in an open conformation. Functions as a peptidyl-prolyl cis-trans isomerase. In Pseudomonas putida (strain W619), this protein is Trigger factor.